We begin with the raw amino-acid sequence, 303 residues long: Glutathione transport system permease protein GsiD (303 aa).

The next 7 membrane-spanning stretches (helical) occupy residues 37-57, 105-125, 144-164, 165-185, 208-228, 230-250, and 266-286; these read QHVA…AIFA, LAAG…LGLL, LFAF…GSGI, ANVI…LVRG, TILF…FFTM, IGTS…AQPP, and VIAP…VLAF. An ABC transmembrane type-1 domain is found at 101-290; sequence AQISLAAGVF…LTVLAFNLLG (190 aa).

The protein belongs to the binding-protein-dependent transport system permease family. As to quaternary structure, the complex is composed of two ATP-binding proteins (GsiA), two transmembrane proteins (GsiC and GsiD) and a solute-binding protein (GsiB).

The protein resides in the cell inner membrane. Part of the ABC transporter complex GsiABCD involved in glutathione import. Probably responsible for the translocation of the substrate across the membrane. This chain is Glutathione transport system permease protein GsiD, found in Salmonella paratyphi A (strain ATCC 9150 / SARB42).